The sequence spans 444 residues: Deoxyguanosinetriphosphate triphosphohydrolase-like protein (444 aa).

The segment at 1-26 (MTESLWHERRLTEEKKRRNDHRSPYQ) is disordered. An HD domain is found at 59 to 250 (RLTHSLEVSQ…MELADDIAYA (192 aa)).

This sequence belongs to the dGTPase family. Type 2 subfamily.

This is Deoxyguanosinetriphosphate triphosphohydrolase-like protein from Shewanella sediminis (strain HAW-EB3).